Here is a 436-residue protein sequence, read N- to C-terminus: F-box/LRR-repeat protein 20 (436 aa).

Residues 22-68 (AVINKKLPKELLLRIFSFLDVVTLCRCAQVSRAWNVLALDGSNWQRI) form the F-box domain. LRR repeat units follow at residues 74 to 100 (QRDI…SLRG), 101 to 126 (CLGV…NLNG), 127 to 152 (CTKT…DLAS), 153 to 178 (CTSI…NISW), 179 to 204 (CDQV…FLKG), 205 to 230 (CTQL…NLQT), 231 to 256 (CLQI…CASG), 257 to 282 (CSNI…EVAR), 283 to 308 (CSQL…DLEE), 309 to 334 (CVQI…SLSH), 335 to 363 (CELI…ELDN), 364 to 388 (CPLI…ELYD), and 389 to 414 (CQQI…AYFA). Thr417 is modified (phosphothreonine). Ser421 carries the phosphoserine modification.

Interacts with SKP1 and CUL1.

It is found in the cytoplasm. Functionally, substrate-recognition component of the SCF (SKP1-CUL1-F-box protein)-type E3 ubiquitin ligase complex. Role in neural transmission. The protein is F-box/LRR-repeat protein 20 (FBXL20) of Bos taurus (Bovine).